Here is a 191-residue protein sequence, read N- to C-terminus: RNA polymerase sigma factor CnrH (191 aa).

Positions 49–62 (DVVQDTFVAAWHAL) match the Polymerase core binding motif. The segment at residues 156–175 (QPEAAAVLGLSVKAVEGRIG) is a DNA-binding region (H-T-H motif).

Belongs to the sigma-70 factor family. ECF subfamily.

Sigma factors are initiation factors that promote the attachment of RNA polymerase to specific initiation sites and are then released. This sigma factor regulates the genes for a membrane-located efflux system that confers resistance to nickel and cobalt. Functionally, cnrH alone is able to activate CNR expression, while both CnrY and CrnX are needed for nickel induction of cnrH. Binds DNA in an RNA polymerase-dependent fashion. CnrH may be controlled by a CnrYX transmembrane anti-sigma factor complex which binds CnrH in the absence of Ni(2+). If Ni(2+) appears in the periplasm, it may be bound by CnrR (CnrX); the signal then would be transmitted by CnrY into the cytoplasm and CnrH would be released. This is RNA polymerase sigma factor CnrH (cnrH) from Cupriavidus metallidurans (strain ATCC 43123 / DSM 2839 / NBRC 102507 / CH34) (Ralstonia metallidurans).